Reading from the N-terminus, the 302-residue chain is Methionyl-tRNA formyltransferase (302 aa).

Position 108–111 (108–111) interacts with (6S)-5,6,7,8-tetrahydrofolate; it reads SLLP. Basic and acidic residues predominate over residues 276 to 288; that stretch reads REGKRPMEPEEFL. Residues 276–302 form a disordered region; sequence REGKRPMEPEEFLRGFPLPEGSRAHTA.

This sequence belongs to the Fmt family.

It catalyses the reaction L-methionyl-tRNA(fMet) + (6R)-10-formyltetrahydrofolate = N-formyl-L-methionyl-tRNA(fMet) + (6S)-5,6,7,8-tetrahydrofolate + H(+). Functionally, attaches a formyl group to the free amino group of methionyl-tRNA(fMet). The formyl group appears to play a dual role in the initiator identity of N-formylmethionyl-tRNA by promoting its recognition by IF2 and preventing the misappropriation of this tRNA by the elongation apparatus. In Cereibacter sphaeroides (strain KD131 / KCTC 12085) (Rhodobacter sphaeroides), this protein is Methionyl-tRNA formyltransferase.